The sequence spans 466 residues: Probable WRKY transcription factor 32 (466 aa).

2 disordered regions span residues Met1 to Leu45 and Ser140 to Pro166. Residues Asp8–Leu38 are compositionally biased toward basic and acidic residues. The segment at residues Val162–Pro226 is a DNA-binding region (WRKY 1). Residues Cys193, Cys198, His221, and His223 each coordinate Zn(2+). The interval His284–Asn317 is disordered. Positions Gly325–Pro390 form a DNA-binding region, WRKY 2. Zn(2+)-binding residues include Cys356, Cys361, His385, and His387. Residues Thr410–Lys439 are disordered. Positions Gln419–Ser429 are enriched in polar residues.

The protein belongs to the WRKY group I family.

Its subcellular location is the nucleus. Functionally, transcription factor. Interacts specifically with the W box (5'-(T)TGAC[CT]-3'), a frequently occurring elicitor-responsive cis-acting element. This chain is Probable WRKY transcription factor 32 (WRKY32), found in Arabidopsis thaliana (Mouse-ear cress).